A 971-amino-acid polypeptide reads, in one-letter code: Exportin-2 (971 aa).

The 74-residue stretch at A29–S102 folds into the Importin N-terminal domain.

Belongs to the XPO2/CSE1 family. As to quaternary structure, interacts with cftr.

Its subcellular location is the cytoplasm. The protein localises to the nucleus. Functionally, export receptor for importin alpha. Mediates importin-alpha re-export from the nucleus to the cytoplasm after import substrates have been released into the nucleoplasm. Negatively regulates fluid secretion and plays a role in fluid homeostasis by down-regulating cftr activity. The chain is Exportin-2 (cse1l) from Pagrus major (Red sea bream).